The following is a 723-amino-acid chain: MSSRALRRLQDDNALLESLLSNSNANKMTSGKSTAGNIQKRENIFSMMNNVRDSDNSTDEGQMSEQDEEAAAAGERDTQSNGQPKRITLASKSSRRKKNKKAKRKQKNHTAEAAKDKGSDDDDDDEEFDKIIQQFKKTDILKYGKTKNDDTNEEGFFTASEPEEASSQPWKSFLSLESDPGFTKFPISCLRHSCKFFQNDFKKLDPHTEFKLLFDDISPESLEDIDSMTSTPVSPQQLKQIQRLKRLIRNWGGKDHRLAPNGPGMHPQHLKFTKIRDDWIPTQRGELSMKLLSSDDLLDWQLWERPLDWKDVIQNDVSQWQKFISFYKFEPLNSDLSKKSMMDFYLSVIVHPDHEALINLISSKFPYHVPGLLQVALIFIRQGDRSNTNGLLQRALFVFDRALKANIIFDSLNCQLPYIYFFNRQFYLAIFRYIQSLAQRGVIGTASEWTKVLWSLSPLEDPLGCRYFLDHYFLLNNDYQYIIELSNSPLMNCYKQWNTLGFSLAVVLSFLRINEMSSARNALLKAFKHHPLQLSELFKEKLLGDHALTKDLSIDGHSAENLELKAYMARFPLLWNRNEEVTFLHDEMSSILQDYHRGNVTIDSNDGQDHNNINNLQSPFFIAGIPINLLRFAILSEESSVMAAIPSFIWSDNEVYEFDVLPPMPTSKESIEVVENIKTFINEKDLAVLQAERMQDEDLLNQIRQISLQQYIHENEESNENEG.

The segment at 21–125 is disordered; sequence SNSNANKMTS…DKGSDDDDDD (105 aa). Polar residues predominate over residues 27-37; that stretch reads KMTSGKSTAGN. Positions 93-108 are enriched in basic residues; the sequence is SSRRKKNKKAKRKQKN. The segment covering 109–118 has biased composition (basic and acidic residues); that stretch reads HTAEAAKDKG. The residue at position 119 (Ser119) is a Phosphoserine. The residue at position 158 (Thr158) is a Phosphothreonine. Ser160 carries the phosphoserine modification.

It belongs to the TCF25 family. Component of the ribosome quality control complex (RQC), composed of the E3 ubiquitin ligase RKR1/LTN1, RQC1 and RQC2, as well as CDC48 and its ubiquitin-binding cofactors. RQC forms a stable complex with 60S ribosomal subunits.

The protein localises to the cytoplasm. Its function is as follows. Component of the ribosome quality control complex (RQC), a ribosome-associated complex that mediates ubiquitination and extraction of incompletely synthesized nascent chains for proteasomal degradation. Within the RQC complex, RQC1 is essential for the recruitment of CDC48 to incompletely synthesized nascent polypeptides that are ubiquitinated by RKR1/LTN1. The sequence is that of Ribosome quality control complex subunit 1 from Saccharomyces cerevisiae (strain ATCC 204508 / S288c) (Baker's yeast).